The sequence spans 210 residues: Orotate phosphoribosyltransferase (210 aa).

Residues Arg-94, Lys-98, His-100, and 120-128 (EDLISTGGS) contribute to the 5-phospho-alpha-D-ribose 1-diphosphate site. Ser-124 contributes to the orotate binding site.

Belongs to the purine/pyrimidine phosphoribosyltransferase family. PyrE subfamily. As to quaternary structure, homodimer. It depends on Mg(2+) as a cofactor.

The enzyme catalyses orotidine 5'-phosphate + diphosphate = orotate + 5-phospho-alpha-D-ribose 1-diphosphate. It participates in pyrimidine metabolism; UMP biosynthesis via de novo pathway; UMP from orotate: step 1/2. Functionally, catalyzes the transfer of a ribosyl phosphate group from 5-phosphoribose 1-diphosphate to orotate, leading to the formation of orotidine monophosphate (OMP). This chain is Orotate phosphoribosyltransferase, found in Bacillus cytotoxicus (strain DSM 22905 / CIP 110041 / 391-98 / NVH 391-98).